A 178-amino-acid polypeptide reads, in one-letter code: MKNIIEKMIYISRWLIFPIYLGLSFCLILLTLKFFQLVFFIFPEIFFISESGLILVILSLIDIVLVGGLLVMVMFSGYENFISKMNIEGDKLGWMGTMDVNSIKNKVSSAIVAISSVHLLRVFMETEKVSNEKIVWYVIIHLTFVVSAGGMAYIDRLNKSNINSSTRKCSVLVNRRKK.

Transmembrane regions (helical) follow at residues 14–34 (WLIF…TLKF), 53–73 (LILV…LVMV), and 136–156 (WYVI…YIDR).

This sequence belongs to the UPF0114 family.

Its subcellular location is the cell membrane. The protein is UPF0114 protein in repA1-repA2 intergenic region of Buchnera aphidicola subsp. Tetraneura caerulescens.